Here is a 779-residue protein sequence, read N- to C-terminus: MTPEFDEEVVFENSPLYQYLQDLGHTDFEICSSLSPKTEKCTTEGQQKPPTRVLPKQGILLKVAETIKSWIFFSQCNKKDDLLHKLDIGFRLDSLHTILQQEVLLQEDVELIELLDPSILSAGQSQQQENGHLPTLCSLATPNIWDLSMLFAFISLLVMLPTWWIVSSWLVWGVILFVYLVIRALRLWRTAKLQVTLKKYSVHLEDMATNSRAFTNLVRKALRLIQETEVISRGFTLVSAACPFNKAGQHPSQHLIGLRKAVYRTLRANFQAARLATLYMLKNYPLNSESDNVTNYICVVPFKELGLGLSEEQISEEEAHNFTDGFSLPALKVLFQLWVAQSSEFFRRLALLLSTANSPPGPLLTPALLPHRILSDVTQGLPHAHSACLEELKRSYEFYRYFETQHQSVPQCLSKTQQKSRELNNVHTAVRSLQLHLKALLNEVIILEDELEKLVCTKETQELVSEAYPILEQKLKLIQPHVQASNNCWEEAISQVDKLLRRNTDKKGKPEIACENPHCTVVPLKQPTLHIADKDPIPEEQELEAYVDDIDIDSDFRKDDFYYLSQEDKERQKREHEESKRVLQELKSVLGFKASEAERQKWKQLLFSDHAVLKSLSPVDPVEPISNSEPSMNSDMGKVSKNDTEEESNKSATTDNEISRTEYLCENSLEGKNKDNSSNEVFPQGAEERMCYQCESEDEPQADGSGLTTAPPTPRDSLQPSIKQRLARLQLSPDFTFTAGLAAEVAARSLSFTTMQEQTFGGEEEEQIIEENKNEIEEK.

The next 2 helical transmembrane spans lie at 139–159 (LATP…LLVM) and 162–182 (TWWI…YLVI). A coiled-coil region spans residues 430–462 (VRSLQLHLKALLNEVIILEDELEKLVCTKETQE). 2 disordered regions span residues 618-719 (PVDP…DSLQ) and 757-779 (EQTF…IEEK). Over residues 625 to 634 (ISNSEPSMNS) the composition is skewed to polar residues. Residues 638–649 (KVSKNDTEEESN) are compositionally biased toward basic and acidic residues. The span at 706–719 (GLTTAPPTPRDSLQ) shows a compositional bias: polar residues. Basic and acidic residues predominate over residues 770–779 (EENKNEIEEK).

The protein belongs to the vezatin family. In terms of assembly, interacts with USH2A (via the cytoplasmic region); the interaction associates VEZT with the USH2 complex at the stereocilia base. Interacts with myosin MYO7A and the cadherin-catenins complex.

It is found in the cell membrane. Its subcellular location is the cell projection. The protein localises to the stereocilium membrane. The protein resides in the cell junction. It localises to the adherens junction. It is found in the nucleus. Its subcellular location is the cytoplasmic vesicle. The protein localises to the secretory vesicle. The protein resides in the acrosome. In terms of biological role, plays a pivotal role in the establishment of adherens junctions and their maintenance in adult life. Required for morphogenesis of the preimplantation embryo, and for the implantation process. (Microbial infection) In case of Listeria infection, promotes bacterial internalization by participating in myosin VIIa recruitment to the entry site. This chain is Vezatin (VEZT), found in Homo sapiens (Human).